Reading from the N-terminus, the 266-residue chain is Putative cysteine-rich repeat secretory protein 20 (266 aa).

An N-terminal signal peptide occupies residues 1-33 (MYFPPSSVPKRLVLVHISAVVAIKLLLIRSVSS). Gnk2-homologous domains lie at 40–142 (YLQH…SIRN) and 148–261 (YNNN…LYPF).

It belongs to the cysteine-rich repeat secretory protein family.

The protein localises to the secreted. The protein is Putative cysteine-rich repeat secretory protein 20 (CRRSP20) of Arabidopsis thaliana (Mouse-ear cress).